We begin with the raw amino-acid sequence, 557 residues long: NADP-dependent malic enzyme (557 aa).

Tyr-88 functions as the Proton donor in the catalytic mechanism. Arg-141 lines the NADP(+) pocket. Lys-159 (proton acceptor) is an active-site residue. Residues Glu-231, Asp-232, and Asp-255 each contribute to the a divalent metal cation site. Asp-255 provides a ligand contact to NADP(+). Ser-322 is modified (phosphoserine). NADP(+) is bound at residue Asn-394.

The protein belongs to the malic enzymes family. Homotetramer. It depends on Mg(2+) as a cofactor. Mn(2+) is required as a cofactor.

Its subcellular location is the cytoplasm. It catalyses the reaction (S)-malate + NADP(+) = pyruvate + CO2 + NADPH. It carries out the reaction oxaloacetate + H(+) = pyruvate + CO2. In terms of biological role, catalyzes the oxidative decarboxylation of (S)-malate in the presence of NADP(+) and divalent metal ions, and decarboxylation of oxaloacetate. The polypeptide is NADP-dependent malic enzyme (ME1) (Sus scrofa (Pig)).